The primary structure comprises 115 residues: SOSS complex subunit C homolog (115 aa).

Belongs to the SOSS-C family.

The protein is SOSS complex subunit C homolog of Drosophila grimshawi (Hawaiian fruit fly).